Here is a 96-residue protein sequence, read N- to C-terminus: UPF0235 protein YggU (96 aa).

The protein belongs to the UPF0235 family.

This is UPF0235 protein YggU from Shigella flexneri.